We begin with the raw amino-acid sequence, 417 residues long: MLARYLNLIGRRSASPYRPQRLPAKFDNVIVAMSSGVDSSVAAALFAGEFPNTRGVYMQNWSESQSLDDPGKEPCYERDWRDVNRVAKHLNIRVDKVNFEQDYWIDVFEPMLRGYSEGSTPNPDIGCNKFVKFGKLREWLDEKYGTGNYWLVTGHYARVMQEMNGKGLFHLLRSIYRPKDQSYYLSQINSTVLSSLLLPIGHLTKPEVRDLAKYAGLPTAEKPDSQGICFVNNSQHGKFKNFLKHYLPSSPGDIITVDPQSGAKTTWGRHDGLWSYTIGQKVGISMPQADPNYQGTWFVSEKLRDTNEILIVRGRDNPALYSDTMRIENFSSLGPREDTINAFQNTGALTLQFRSLQVPVQIKSCKLNRSADNLDITIHLASKQRAITPGQSCCLYIDDRVLGSGPISHVNNNDTHA.

ATP is bound by residues 32–39 (AMSSGVDS) and Met-58. The segment at 122–124 (NPD) is interaction with target base in tRNA. Cys-127 acts as the Nucleophile in catalysis. A disulfide bridge links Cys-127 with Cys-229. Gly-154 provides a ligand contact to ATP. An interaction with tRNA region spans residues 179–181 (KDQ). Cys-229 serves as the catalytic Cysteine persulfide intermediate. Residues 354 to 355 (RS) are interaction with tRNA.

The protein belongs to the MnmA/TRMU family.

Its subcellular location is the mitochondrion. It carries out the reaction 5-taurinomethyluridine(34) in tRNA + S-sulfanyl-L-cysteinyl-[protein] + AH2 + ATP = 5-taurinomethyl-2-thiouridine(34) in tRNA + L-cysteinyl-[protein] + A + AMP + diphosphate + H(+). Catalyzes the 2-thiolation of uridine at the wobble position (U34) of mitochondrial tRNA(Lys), tRNA(Glu) and tRNA(Gln). Required for the formation of 5-taurinomethyl-2-thiouridine (tm5s2U) of mitochondrial tRNA(Lys), tRNA(Glu), and tRNA(Gln) at the wobble position. ATP is required to activate the C2 atom of the wobble base. In Saccharomyces cerevisiae (strain ATCC 204508 / S288c) (Baker's yeast), this protein is Mitochondrial tRNA-specific 2-thiouridylase 1 (SLM3).